The sequence spans 261 residues: Cytochrome c oxidase subunit 3 (261 aa).

Over 1 to 15 the chain is Mitochondrial matrix; sequence MTHQTHAYHMVNPSP. Residues 16–34 form a helical membrane-spanning segment; that stretch reads WPLTGALSALLMTSGLIMW. Topologically, residues 35–40 are mitochondrial intermembrane; the sequence is FHFNSM. A helical transmembrane segment spans residues 41–66; it reads TLLMLGLTTNMLTMYQWWRDIIREST. Residues 67–72 lie on the Mitochondrial matrix side of the membrane; the sequence is FQGHHT. A helical transmembrane segment spans residues 73–105; sequence SAVQKGLRYGMILFIISEVLFFTGFFWAFYHSS. At 106–128 the chain is on the mitochondrial intermembrane side; it reads LAPTPELGGCWPPTGIHPLNPLE. Residues 129–152 form a helical membrane-spanning segment; sequence VPLLNTSVLLASGVSITWAHHSLM. At 153 to 155 the chain is on the mitochondrial matrix side; it reads EGN. A helical membrane pass occupies residues 156–183; the sequence is RNHMLQALFITIALGVYFTLLQASEYYE. At 184–190 the chain is on the mitochondrial intermembrane side; the sequence is APFTISD. A helical transmembrane segment spans residues 191 to 223; the sequence is GVYGSTFFVATGFHGLHVIIGSTFLIVCFFRQL. Over 224-232 the chain is Mitochondrial matrix; that stretch reads KFHFTSTHH. A helical membrane pass occupies residues 233–256; sequence FGFEAAAWYWHFVDVVWLFLYVSI. The Mitochondrial intermembrane portion of the chain corresponds to 257 to 261; the sequence is YWWGS.

This sequence belongs to the cytochrome c oxidase subunit 3 family. In terms of assembly, component of the cytochrome c oxidase (complex IV, CIV), a multisubunit enzyme composed of 14 subunits. The complex is composed of a catalytic core of 3 subunits MT-CO1, MT-CO2 and MT-CO3, encoded in the mitochondrial DNA, and 11 supernumerary subunits COX4I, COX5A, COX5B, COX6A, COX6B, COX6C, COX7A, COX7B, COX7C, COX8 and NDUFA4, which are encoded in the nuclear genome. The complex exists as a monomer or a dimer and forms supercomplexes (SCs) in the inner mitochondrial membrane with NADH-ubiquinone oxidoreductase (complex I, CI) and ubiquinol-cytochrome c oxidoreductase (cytochrome b-c1 complex, complex III, CIII), resulting in different assemblies (supercomplex SCI(1)III(2)IV(1) and megacomplex MCI(2)III(2)IV(2)).

Its subcellular location is the mitochondrion inner membrane. The catalysed reaction is 4 Fe(II)-[cytochrome c] + O2 + 8 H(+)(in) = 4 Fe(III)-[cytochrome c] + 2 H2O + 4 H(+)(out). Functionally, component of the cytochrome c oxidase, the last enzyme in the mitochondrial electron transport chain which drives oxidative phosphorylation. The respiratory chain contains 3 multisubunit complexes succinate dehydrogenase (complex II, CII), ubiquinol-cytochrome c oxidoreductase (cytochrome b-c1 complex, complex III, CIII) and cytochrome c oxidase (complex IV, CIV), that cooperate to transfer electrons derived from NADH and succinate to molecular oxygen, creating an electrochemical gradient over the inner membrane that drives transmembrane transport and the ATP synthase. Cytochrome c oxidase is the component of the respiratory chain that catalyzes the reduction of oxygen to water. Electrons originating from reduced cytochrome c in the intermembrane space (IMS) are transferred via the dinuclear copper A center (CU(A)) of subunit 2 and heme A of subunit 1 to the active site in subunit 1, a binuclear center (BNC) formed by heme A3 and copper B (CU(B)). The BNC reduces molecular oxygen to 2 water molecules using 4 electrons from cytochrome c in the IMS and 4 protons from the mitochondrial matrix. This chain is Cytochrome c oxidase subunit 3 (MT-CO3), found in Damaliscus lunatus (Tsessebe).